The primary structure comprises 665 residues: MLRERTVRLQYGSRVEAVYVLGTYLWTDVYSAAPAGAQTFSLKHSEHVWVEVVRDGEAEEVATNGKQRWLLSPSTTLRVTMSQASTEASSDKVTVNYYDEEGSIPIDQAGLFLTAIEISLDVDADRDGVVEKNNPKKASWTWGPEGQGAILLVNCDRETPWLPKEDCRDEKVYSKEDLKDMSQMILRTKGPDRLPAGYEIVLYISMSDSDKVGVFYVENPFFGQRYIHILGRRKLYHVVKYTGGSAELLFFVEGLCFPDEGFSGLVSIHVSLLEYMAQDIPLTPIFTDTVIFRIAPWIMTPNILPPVSVFVCCMKDNYLFLKEVKNLVEKTNCELKVCFQYLNRGDRWIQDEIEFGYIEAPHKGFPVVLDSPRDGNLKDFPVKELLGPDFGYVTREPLFESVTSLDSFGNLEVSPPVTVNGKTYPLGRILIGSSFPLSGGRRMTKVVRDFLKAQQVQAPVELYSDWLTVGHVDEFMSFVPIPGTKKFLLLMASTSACYKLFREKQKDGHGEAIMFKGLGGMSSKRITINKILSNESLVQENLYFQRCLDWNRDILKKELGLTEQDIIDLPALFKMDEDHRARAFFPNMVNMIVLDKDLGIPKPFGPQVEEECCLEMHVRGLLEPLGLECTFIDDISAYHKFLGEVHCGTNVRRKPFTFKWWHMVP.

The Ca(2+) site is built by Asp123, Asp125, Asp127, Val129, Glu131, Asn154, Asp156, Glu158, Asp166, Asp169, Lys171, Asp177, Asp180, Glu354, Asp389, Phe408, Leu411, and Glu412. Residue Cys647 is the Nucleophile of the active site.

Belongs to the protein arginine deiminase family. Homodimer. Requires Ca(2+) as cofactor. As to expression, detected in keratinocytes in epidermis (at protein level).

The protein localises to the cytoplasm. The enzyme catalyses L-arginyl-[protein] + H2O = L-citrullyl-[protein] + NH4(+). Functionally, catalyzes the deimination of arginine residues of proteins. The polypeptide is Protein-arginine deiminase type-2 (PADI2) (Homo sapiens (Human)).